A 411-amino-acid polypeptide reads, in one-letter code: MKETRGDGGSAPFCTRLNHSYPGMWAPEARGNLTRPPGPGEDCGSVSVAFPITMLITGFVGNALAMLLVSRSYRRRESKRKKSFLLCIGWLALTDLVGQLLTSPVVILVYLSKQRWEQLDPSGRLCTFFGLTMTVFGLSSLFIASAMAVERALAIRAPHWYASHMKTRATRAVLLGVWLAVLAFALLPVLGVGQYTIQWPGTWCFISTGRGDNGTSSSHNWGNLFFASTFAFLGLLALAITFTCNLATIKALVSRCRAKAAASQSSAQWGRITTETAIQLMGIMCVLSVCWSPLLIMMLKMIFNQTSVEHCKTDTGKQKECNFFLIAVRLASLNQILDPWVYLLLRKILLRKFCQVIHENNEQKDEIQRENRNVSHSGQHEEARDSEKSKTIPGLFSILLQADPGARPYQQ.

Topologically, residues 1-49 are extracellular; the sequence is MKETRGDGGSAPFCTRLNHSYPGMWAPEARGNLTRPPGPGEDCGSVSVA. 2 N-linked (GlcNAc...) asparagine glycosylation sites follow: asparagine 18 and asparagine 32. The chain crosses the membrane as a helical span at residues 50-74; that stretch reads FPITMLITGFVGNALAMLLVSRSYR. Residues 75–87 are Cytoplasmic-facing; that stretch reads RRESKRKKSFLLC. The helical transmembrane segment at 88-108 threads the bilayer; that stretch reads IGWLALTDLVGQLLTSPVVIL. Residues 109–127 are Extracellular-facing; sequence VYLSKQRWEQLDPSGRLCT. Residues cysteine 126 and cysteine 204 are joined by a disulfide bond. A helical membrane pass occupies residues 128–149; it reads FFGLTMTVFGLSSLFIASAMAV. Over 150 to 171 the chain is Cytoplasmic; sequence ERALAIRAPHWYASHMKTRATR. The helical transmembrane segment at 172-193 threads the bilayer; the sequence is AVLLGVWLAVLAFALLPVLGVG. The Extracellular segment spans residues 194–223; sequence QYTIQWPGTWCFISTGRGDNGTSSSHNWGN. Asparagine 213 is a glycosylation site (N-linked (GlcNAc...) asparagine). Residues 224–249 form a helical membrane-spanning segment; it reads LFFASTFAFLGLLALAITFTCNLATI. The Cytoplasmic portion of the chain corresponds to 250 to 279; it reads KALVSRCRAKAAASQSSAQWGRITTETAIQ. The helical transmembrane segment at 280 to 303 threads the bilayer; sequence LMGIMCVLSVCWSPLLIMMLKMIF. The Extracellular segment spans residues 304 to 323; that stretch reads NQTSVEHCKTDTGKQKECNF. Residues 324–345 traverse the membrane as a helical segment; that stretch reads FLIAVRLASLNQILDPWVYLLL. Topologically, residues 346–411 are cytoplasmic; that stretch reads RKILLRKFCQ…ADPGARPYQQ (66 aa). The span at 367–390 shows a compositional bias: basic and acidic residues; the sequence is IQRENRNVSHSGQHEEARDSEKSK. Residues 367–392 are disordered; sequence IQRENRNVSHSGQHEEARDSEKSKTI.

It belongs to the G-protein coupled receptor 1 family. In terms of assembly, interacts (via C-terminus) with MKLN1. As to expression, in the kidney cortex and medulla, adrenal gland and stomach. In kidney, expression is higher in tubules in the outer medulla, with lower levels in cortex. In kidney cortex, expression is restricted to distal tubules.

Its subcellular location is the cell membrane. Its function is as follows. Receptor for prostaglandin E2 (PGE2). Required for normal development of fever in response to pyrinogens, including IL1B, prostaglandin E2 and bacterial lipopolysaccharide (LPS). Required for normal potentiation of platelet aggregation by prostaglandin E2, and thus plays a role in the regulation of blood coagulation. Required for increased HCO3(-) secretion in the duodenum in response to mucosal acidification, and thereby contributes to the protection of the mucosa against acid-induced ulceration. Not required for normal kidney function, normal urine volume and osmolality. This chain is Prostaglandin E2 receptor EP3 subtype (PTGER3), found in Oryctolagus cuniculus (Rabbit).